We begin with the raw amino-acid sequence, 628 residues long: Set1/Ash2 histone methyltransferase complex subunit ASH2 (628 aa).

At methionine 1 the chain carries N-acetylmethionine. The span at 1 to 18 (MAAAGAGPGQEAGAGPGP) shows a compositional bias: gly residues. Residues 1 to 66 (MAAAGAGPGQ…SGEAEGGEAN (66 aa)) form a PHD-type; atypical zinc finger. A disordered region spans residues 1 to 107 (MAAAGAGPGQ…QAGSVDEENG (107 aa)). The segment covering 36-65 (AAGAAAPPGEGISAAPTVEPSSGEAEGGEA) has biased composition (low complexity). The tract at residues 67–177 (LVDVSGGLET…MCLSALANLT (111 aa)) is DNA-binding. At serine 101 the chain carries Phosphoserine. The C4-type zinc-finger motif lies at 117-150 (CGICTKWFTADTFGIDTSSCLPFMTNYSFHCNVC). Residues 235–252 (LVKEHPDPGSKDPEEDYP) show a composition bias toward basic and acidic residues. The interval 235-331 (LVKEHPDPGS…AQRLPPHGYP (97 aa)) is disordered. The span at 270–282 (NQKQSSAVSTSGN) shows a compositional bias: polar residues. The segment covering 283–295 (LNGGIAAGSSGKG) has biased composition (gly residues). An Asymmetric dimethylarginine; by PRMT1 and PRMT5 modification is found at arginine 296. The residue at position 316 (serine 316) is a Phosphoserine. The segment at 316–628 (SDPLFSAQRL…DGRRSPPWEP (313 aa)) is interaction with RBBP5. In terms of domain architecture, B30.2/SPRY spans 360 to 583 (LDCWAGKPIP…VSINFGPCFK (224 aa)).

As to quaternary structure, interacts with HCFC1. Core component of several methyltransferase-containing complexes including MLL1/MLL, MLL2/3 (also named ASCOM complex) and MLL4/WBP7. Each complex is at least composed of ASH2L, RBBP5, WDR5, DPY30, one or more specific histone methyltransferases (KMT2A/MLL1, KMT2D/MLL2, KMT2C/MLL3 and KMT2B/MLL4), and the facultative components PAGR1, BACC1, CHD8, E2F6, HCFC1, HCFC2, HSP70, INO80C, KDM6A, KANSL1, LAS1L, MAX, MCRS1, MEN1, MGA, KAT8/MOF, NCOA6, PAXIP1/PTIP, PELP1, PHF20, PRP31, RING2, RUVB1/TIP49A, RUVB2/TIP49B, SENP3, TAF1, TAF4, TAF6, TAF7, TAF9, TEX10 and alpha- and beta-tubulin. Component of the SET1 complex, at least composed of the catalytic subunit (SETD1A or SETD1B), WDR5, WDR82, RBBP5, ASH2L/ASH2, CXXC1/CFP1, HCFC1 and DPY30. Found in a complex with RBBP5, ASH2L, DPY30, KMT2A, KMT2D and WDR5. Component of a histone methylation complex composed of at least ZNF335, RBBP5, ASH2L and WDR5; the complex may have histone H3-specific methyltransferase activity, however does not have specificity for 'Lys-4' of histone H3. Within the complex, interacts with ZNF335. Interacts with RBBP5. Components of this complex may associate with components of a nuclear receptor-mediated transcription complex to form a complex at least composed of ZNF335, HCFC1, CCAR2, EMSY, MKI67, RBBP5, ASH2L and WDR5. Within this complex also interacts with CCAR2 and EMSY. Interacts with DPY30. Interacts with SETD1A and SETD1B. Both monomethylated and dimethylated on arginine residues in the C-terminus. Arg-296 is the major site. Methylation is not required for nuclear localization, nor for MLL complex integrity or maintenance of global histone H3K4me3 levels. In terms of tissue distribution, ubiquitously expressed. Predominantly expressed in adult heart and testis and fetal lung and liver, with barely detectable expression in adult lung, liver, kidney, prostate, and peripheral leukocytes.

Its subcellular location is the nucleus. Transcriptional regulator. Component or associated component of some histone methyltransferase complexes which regulates transcription through recruitment of those complexes to gene promoters. Component of the Set1/Ash2 histone methyltransferase (HMT) complex, a complex that specifically methylates 'Lys-4' of histone H3, but not if the neighboring 'Lys-9' residue is already methylated. As part of the MLL1/MLL complex it is involved in methylation and dimethylation at 'Lys-4' of histone H3. May play a role in hematopoiesis. In association with RBBP5 and WDR5, stimulates the histone methyltransferase activities of KMT2A, KMT2B, KMT2C, KMT2D, SETD1A and SETD1B. The polypeptide is Set1/Ash2 histone methyltransferase complex subunit ASH2 (ASH2L) (Homo sapiens (Human)).